We begin with the raw amino-acid sequence, 599 residues long: Aspartate--tRNA ligase (599 aa).

E180 contributes to the L-aspartate binding site. Positions Q204–K207 are aspartate. R226 provides a ligand contact to L-aspartate. ATP is bound by residues R226 to E228 and Q235. Residue H454 coordinates L-aspartate. ATP is bound at residue E488. R495 contributes to the L-aspartate binding site. G540–R543 provides a ligand contact to ATP.

Belongs to the class-II aminoacyl-tRNA synthetase family. Type 1 subfamily. Homodimer.

It is found in the cytoplasm. It catalyses the reaction tRNA(Asp) + L-aspartate + ATP = L-aspartyl-tRNA(Asp) + AMP + diphosphate. In terms of biological role, catalyzes the attachment of L-aspartate to tRNA(Asp) in a two-step reaction: L-aspartate is first activated by ATP to form Asp-AMP and then transferred to the acceptor end of tRNA(Asp). The protein is Aspartate--tRNA ligase of Clostridium botulinum (strain Alaska E43 / Type E3).